The primary structure comprises 397 residues: Elongation factor Tu (397 aa).

The 197-residue stretch at 10 to 206 folds into the tr-type G domain; sequence KPHVNIGTIG…EVDAYIPTPE (197 aa). The interval 19 to 26 is G1; sequence GHVDHGKT. 19-26 contributes to the GTP binding site; that stretch reads GHVDHGKT. Thr26 contributes to the Mg(2+) binding site. The tract at residues 60-64 is G2; sequence GITIN. Residues 81-84 are G3; the sequence is DCPG. GTP contacts are provided by residues 81-85 and 136-139; these read DCPGH and NKAD. The segment at 136-139 is G4; it reads NKAD. The G5 stretch occupies residues 174–176; that stretch reads SAL.

This sequence belongs to the TRAFAC class translation factor GTPase superfamily. Classic translation factor GTPase family. EF-Tu/EF-1A subfamily. Monomer.

It localises to the cytoplasm. It catalyses the reaction GTP + H2O = GDP + phosphate + H(+). Functionally, GTP hydrolase that promotes the GTP-dependent binding of aminoacyl-tRNA to the A-site of ribosomes during protein biosynthesis. This chain is Elongation factor Tu, found in Clostridium acetobutylicum (strain ATCC 824 / DSM 792 / JCM 1419 / IAM 19013 / LMG 5710 / NBRC 13948 / NRRL B-527 / VKM B-1787 / 2291 / W).